The chain runs to 510 residues: Maturase K (510 aa).

Belongs to the intron maturase 2 family. MatK subfamily.

The protein localises to the plastid. Its subcellular location is the chloroplast. Usually encoded in the trnK tRNA gene intron. Probably assists in splicing its own and other chloroplast group II introns. This Gratiola officinalis (Hedgehyssop) protein is Maturase K.